Consider the following 41-residue polypeptide: Chymotrypsin inhibitor (41 aa).

In terms of biological role, inhibits chymotrypsin. This Eisenia hortensis (European nightcrawler) protein is Chymotrypsin inhibitor.